The sequence spans 345 residues: uncharacterized protein (345 aa).

PDZ GRASP-type domains are found at residues 27 to 112 and 118 to 207; these read CGFR…WASI and AIWH…HGVL. Positions 27 to 223 are GRASP; it reads CGFRVLKVEN…LSGPPPQPGD (197 aa). Positions 229–345 are disordered; that stretch reads PMLGGPDHKV…APQNEELVKN (117 aa). Over residues 297-308 the composition is skewed to basic and acidic residues; it reads KLSRELDHKTKD. Composition is skewed to polar residues over residues 309-318 and 328-338; these read ASSTNDSQTT and VNSTNDESAPQ.

Its subcellular location is the golgi apparatus membrane. This is an uncharacterized protein from Schizosaccharomyces pombe (strain 972 / ATCC 24843) (Fission yeast).